The sequence spans 212 residues: UPF0502 protein ECA2523 (212 aa).

The protein belongs to the UPF0502 family.

This chain is UPF0502 protein ECA2523, found in Pectobacterium atrosepticum (strain SCRI 1043 / ATCC BAA-672) (Erwinia carotovora subsp. atroseptica).